A 530-amino-acid polypeptide reads, in one-letter code: Laccase-2 (530 aa).

The signal sequence occupies residues Met-1–Ala-23. Plastocyanin-like domains lie at Asn-36–Glu-154 and Thr-167–Asn-311. Asn-82 is a glycosylation site (N-linked (GlcNAc...) asparagine). Cu cation contacts are provided by His-88 and His-90. 2 disulfide bridges follow: Cys-109/Cys-520 and Cys-141/Cys-228. Asn-120 carries N-linked (GlcNAc...) asparagine glycosylation. The Cu cation site is built by His-133 and His-135. Residues Asn-191, Asn-240, Asn-292, Asn-311, Asn-366, Asn-375, Asn-392, and Asn-412 are each glycosylated (N-linked (GlcNAc...) asparagine). The 126-residue stretch at Tyr-379–Gln-504 folds into the Plastocyanin-like 3 domain. Cu cation contacts are provided by His-428, His-431, His-433, His-484, Cys-485, His-486, and His-490.

Belongs to the multicopper oxidase family. Cu cation is required as a cofactor.

The protein localises to the secreted. It catalyses the reaction 4 hydroquinone + O2 = 4 benzosemiquinone + 2 H2O. With respect to regulation, inhibited by chloride ions. Inhibited by citrate. Inhibited by oxalate. Activated by acetate. Its function is as follows. In vitro, has activity towards 2,2'-azino-bis(3-ethylbenzthiazoline-6-sulfonic acid) (ABTS), 2,6-dimethoxy-phenol, and guaiacol. Although brown rot fungi preferentially degrade hemicellulose and cellulose, the enzyme may contribute to generating small amounts of lignin breakdown products required for catalytic reactions. The sequence is that of Laccase-2 from Fomitopsis schrenkii (Brown rot fungus).